A 556-amino-acid polypeptide reads, in one-letter code: U-box domain-containing protein 38 (556 aa).

A disordered region spans residues 1-34 (MGKNGRLRWNPFSHRSSSSTSSSSRQQQQEQQPP). Low complexity predominate over residues 13 to 32 (SHRSSSSTSSSSRQQQQEQQ). Positions 32-108 (QPPVEFLCPI…DTWCDTVGVS (77 aa)) constitute a U-box domain. ARM repeat units lie at residues 256 to 295 (DEAR…NLSL), 297 to 336 (KKNK…SLSL), 338 to 378 (DDNK…HLTL), 380 to 417 (QTNR…NLAC), and 418 to 468 (CSEG…ALSH).

In terms of assembly, binds to SD16, SD17, SD18 and SD129.

The catalysed reaction is S-ubiquitinyl-[E2 ubiquitin-conjugating enzyme]-L-cysteine + [acceptor protein]-L-lysine = [E2 ubiquitin-conjugating enzyme]-L-cysteine + N(6)-ubiquitinyl-[acceptor protein]-L-lysine.. It functions in the pathway protein modification; protein ubiquitination. In terms of biological role, functions as an E3 ubiquitin ligase. The chain is U-box domain-containing protein 38 (PUB38) from Arabidopsis thaliana (Mouse-ear cress).